Here is a 156-residue protein sequence, read N- to C-terminus: Small ribosomal subunit protein uS7 (156 aa).

It belongs to the universal ribosomal protein uS7 family. Part of the 30S ribosomal subunit. Contacts proteins S9 and S11.

In terms of biological role, one of the primary rRNA binding proteins, it binds directly to 16S rRNA where it nucleates assembly of the head domain of the 30S subunit. Is located at the subunit interface close to the decoding center, probably blocks exit of the E-site tRNA. This is Small ribosomal subunit protein uS7 from Tremblaya princeps.